The following is a 552-amino-acid chain: 5'-AMP-activated protein kinase catalytic subunit alpha-2 (552 aa).

The 253-residue stretch at 16-268 (YVLGDTLGVG…IKDIREHEWF (253 aa)) folds into the Protein kinase domain. ATP is bound by residues 22 to 30 (LGVGTFGKV) and K45. Catalysis depends on D139, which acts as the Proton acceptor. T172 carries the phosphothreonine; by LKB1 and CaMKK2 modification. Phosphothreonine is present on T258. An AIS region spans residues 291-376 (EAVKEVCEKF…PERMPPLIAD (86 aa)). S377 carries the post-translational modification Phosphoserine. The disordered stretch occupies residues 477 to 521 (VEQRSGSSTPQRSCSAAGLHRPRSSFDSTTAESHSLSGSLTGSLT). Polar residues predominate over residues 480–490 (RSGSSTPQRSC). The residue at position 491 (S491) is a Phosphoserine. The span at 501–510 (SFDSTTAESH) shows a compositional bias: polar residues. Over residues 511-521 (SLSGSLTGSLT) the composition is skewed to low complexity.

The protein belongs to the protein kinase superfamily. CAMK Ser/Thr protein kinase family. SNF1 subfamily. In terms of assembly, AMPK is a heterotrimer of an alpha catalytic subunit (PRKAA1 or PRKAA2), a beta (PRKAB1 or PRKAB2) and a gamma non-catalytic subunits (PRKAG1, PRKAG2 or PRKAG3). Interacts with FNIP1 and FNIP2. Interacts with DUSP29. Interacts with ARF6. The phosphorylated form at Thr-172 mediated by CamKK2 interacts with ACSS2. The cofactor is Mg(2+). In terms of processing, ubiquitinated. Post-translationally, phosphorylated at Thr-172 by STK11/LKB1 in complex with STE20-related adapter-alpha (STRADA) pseudo kinase and CAB39. Also phosphorylated at Thr-172 by CAMKK2; triggered by a rise in intracellular calcium ions, without detectable changes in the AMP/ATP ratio. CAMKK1 can also phosphorylate Thr-172, but at much lower level. Dephosphorylated by protein phosphatase 2A and 2C (PP2A and PP2C). Phosphorylated by ULK1; leading to negatively regulate AMPK activity and suggesting the existence of a regulatory feedback loop between ULK1 and AMPK. Dephosphorylated by PPM1A and PPM1B at Thr-172 (mediated by STK11/LKB1).

The protein localises to the cytoplasm. Its subcellular location is the nucleus. The enzyme catalyses L-seryl-[protein] + ATP = O-phospho-L-seryl-[protein] + ADP + H(+). It carries out the reaction L-threonyl-[protein] + ATP = O-phospho-L-threonyl-[protein] + ADP + H(+). It catalyses the reaction L-seryl-[acetyl-CoA carboxylase] + ATP = O-phospho-L-seryl-[acetyl-CoA carboxylase] + ADP + H(+). The catalysed reaction is L-seryl-[3-hydroxy-3-methylglutaryl-coenzyme A reductase] + ATP = O-phospho-L-seryl-[3-hydroxy-3-methylglutaryl-coenzyme A reductase] + ADP + H(+). Its activity is regulated as follows. Activated by phosphorylation on Thr-172. Binding of AMP to non-catalytic gamma subunit (PRKAG1, PRKAG2 or PRKAG3) results in allosteric activation, inducing phosphorylation on Thr-172. AMP-binding to gamma subunit also sustains activity by preventing dephosphorylation of Thr-172. ADP also stimulates Thr-172 phosphorylation, without stimulating already phosphorylated AMPK. ATP promotes dephosphorylation of Thr-172, rendering the enzyme inactive. Under physiological conditions AMPK mainly exists in its inactive form in complex with ATP, which is much more abundant than AMP. Selectively inhibited by compound C (6-[4-(2-Piperidin-1-yl-ethoxy)-phenyl)]-3-pyridin-4-yl-pyyrazolo[1,5-a] pyrimidine. Activated by resveratrol, a natural polyphenol present in red wine, and S17834, a synthetic polyphenol. Salicylate/aspirin directly activates kinase activity, primarily by inhibiting Thr-172 dephosphorylation. Its function is as follows. Catalytic subunit of AMP-activated protein kinase (AMPK), an energy sensor protein kinase that plays a key role in regulating cellular energy metabolism. In response to reduction of intracellular ATP levels, AMPK activates energy-producing pathways and inhibits energy-consuming processes: inhibits protein, carbohydrate and lipid biosynthesis, as well as cell growth and proliferation. AMPK acts via direct phosphorylation of metabolic enzymes, and by longer-term effects via phosphorylation of transcription regulators. Regulates lipid synthesis by phosphorylating and inactivating lipid metabolic enzymes such as ACACA, ACACB, GYS1, HMGCR and LIPE; regulates fatty acid and cholesterol synthesis by phosphorylating acetyl-CoA carboxylase (ACACA and ACACB) and hormone-sensitive lipase (LIPE) enzymes, respectively. Promotes lipolysis of lipid droplets by mediating phosphorylation of isoform 1 of CHKA (CHKalpha2). Regulates insulin-signaling and glycolysis by phosphorylating IRS1, PFKFB2 and PFKFB3. Involved in insulin receptor/INSR internalization. AMPK stimulates glucose uptake in muscle by increasing the translocation of the glucose transporter SLC2A4/GLUT4 to the plasma membrane, possibly by mediating phosphorylation of TBC1D4/AS160. Regulates transcription and chromatin structure by phosphorylating transcription regulators involved in energy metabolism such as CRTC2/TORC2, FOXO3, histone H2B, HDAC5, MEF2C, MLXIPL/ChREBP, EP300, HNF4A, p53/TP53, SREBF1, SREBF2 and PPARGC1A. Acts as a key regulator of glucose homeostasis in liver by phosphorylating CRTC2/TORC2, leading to CRTC2/TORC2 sequestration in the cytoplasm. In response to stress, phosphorylates 'Ser-36' of histone H2B (H2BS36ph), leading to promote transcription. Acts as a key regulator of cell growth and proliferation by phosphorylating FNIP1, TSC2, RPTOR, WDR24 and ATG1/ULK1: in response to nutrient limitation, negatively regulates the mTORC1 complex by phosphorylating RPTOR component of the mTORC1 complex and by phosphorylating and activating TSC2. Also phosphorylates and inhibits GATOR2 subunit WDR24 in response to nutrient limitation, leading to suppress glucose-mediated mTORC1 activation. In response to energetic stress, phosphorylates FNIP1, inactivating the non-canonical mTORC1 signaling, thereby promoting nuclear translocation of TFEB and TFE3, and inducing transcription of lysosomal or autophagy genes. In response to nutrient limitation, promotes autophagy by phosphorylating and activating ATG1/ULK1. In that process also activates WDR45/WIPI4. Phosphorylates CASP6, thereby preventing its autoprocessing and subsequent activation. AMPK also acts as a regulator of circadian rhythm by mediating phosphorylation of CRY1, leading to destabilize it. May regulate the Wnt signaling pathway by phosphorylating CTNNB1, leading to stabilize it. Also acts as a regulator of cellular polarity by remodeling the actin cytoskeleton; probably by indirectly activating myosin. Also phosphorylates CFTR, EEF2K, KLC1, NOS3 and SLC12A1. Plays an important role in the differential regulation of pro-autophagy (composed of PIK3C3, BECN1, PIK3R4 and UVRAG or ATG14) and non-autophagy (composed of PIK3C3, BECN1 and PIK3R4) complexes, in response to glucose starvation. Can inhibit the non-autophagy complex by phosphorylating PIK3C3 and can activate the pro-autophagy complex by phosphorylating BECN1. Upon glucose starvation, promotes ARF6 activation in a kinase-independent manner leading to cell migration. Upon glucose deprivation mediates the phosphorylation of ACSS2 at 'Ser-659', which exposes the nuclear localization signal of ACSS2, required for its interaction with KPNA1 and nuclear translocation. Upon stress, regulates mitochondrial fragmentation through phosphorylation of MTFR1L. In Pongo abelii (Sumatran orangutan), this protein is 5'-AMP-activated protein kinase catalytic subunit alpha-2 (PRKAA2).